The chain runs to 127 residues: Glycine cleavage system H protein (127 aa).

The 83-residue stretch at 24-106 folds into the Lipoyl-binding domain; it reads VVTVGVTFHA…YGAGWFFKLK (83 aa). N6-lipoyllysine is present on Lys65.

Belongs to the GcvH family. The glycine cleavage system is composed of four proteins: P, T, L and H. Requires (R)-lipoate as cofactor.

The glycine cleavage system catalyzes the degradation of glycine. The H protein shuttles the methylamine group of glycine from the P protein to the T protein. This Laribacter hongkongensis (strain HLHK9) protein is Glycine cleavage system H protein.